A 633-amino-acid polypeptide reads, in one-letter code: uncharacterized protein (633 aa).

The tract at residues 1-188 is disordered; the sequence is MNNRGGFSHP…GQSSFYNSSY (188 aa). Low complexity-rich tracts occupy residues 32–80 and 104–148; these read GQPQ…GGNN and NNGN…TNSR. Gly residues predominate over residues 152–178; it reads RGGSSRGGSSRGGNSGSSRGGSRGGYR. Residues 580-607 adopt a coiled-coil conformation; that stretch reads KSKNWTVDQASDELKKLSKNLRLLVSKH. Residues 611 to 633 form a disordered region; the sequence is TKFQPPSADHTTQFEQDDEEEEN.

This is an uncharacterized protein from Dictyostelium discoideum (Social amoeba).